We begin with the raw amino-acid sequence, 251 residues long: tRNA (guanine-N(1)-)-methyltransferase (251 aa).

S-adenosyl-L-methionine is bound by residues glycine 111 and 131 to 136 (LGDFVL).

This sequence belongs to the RNA methyltransferase TrmD family. As to quaternary structure, homodimer.

The protein resides in the cytoplasm. The catalysed reaction is guanosine(37) in tRNA + S-adenosyl-L-methionine = N(1)-methylguanosine(37) in tRNA + S-adenosyl-L-homocysteine + H(+). In terms of biological role, specifically methylates guanosine-37 in various tRNAs. In Synechococcus sp. (strain JA-2-3B'a(2-13)) (Cyanobacteria bacterium Yellowstone B-Prime), this protein is tRNA (guanine-N(1)-)-methyltransferase.